We begin with the raw amino-acid sequence, 99 residues long: Nucleoid-associated protein EbfC (99 aa).

This sequence belongs to the YbaB/EbfC family. In terms of assembly, homodimer.

The protein resides in the cytoplasm. Its subcellular location is the nucleoid. Functionally, binds to DNA and alters its conformation. May be involved in regulation of gene expression, nucleoid organization and DNA protection. The chain is Nucleoid-associated protein EbfC from Borrelia turicatae (strain 91E135).